The following is a 604-amino-acid chain: Sulfite reductase [NADPH] flavoprotein alpha-component (604 aa).

The Flavodoxin-like domain occupies 65 to 203; it reads VTILYGSQTG…AAGQWHADVL (139 aa). FMN-binding positions include 71–76, 118–121, and 154–163; these read SQTGNG, STHG, and LGDSSYEFFC. Residues 236 to 453 enclose the FAD-binding FR-type domain; the sequence is QNPYSAEVLV…VEPNKHFRLP (218 aa). Residues Thr-324, Leu-358, 392–395, 410–412, and 425–428 each bind FAD; these read RLYS, TVA, and GGAS. Residues 524–525, 530–534, and Asp-566 each bind NADP(+); these read SR and KIYVQ. Position 604 (Tyr-604) interacts with FAD.

Belongs to the NADPH-dependent sulphite reductase flavoprotein subunit CysJ family. It in the N-terminal section; belongs to the flavodoxin family. This sequence in the C-terminal section; belongs to the flavoprotein pyridine nucleotide cytochrome reductase family. Alpha(8)-beta(8). The alpha component is a flavoprotein, the beta component is a hemoprotein. It depends on FAD as a cofactor. The cofactor is FMN.

The catalysed reaction is hydrogen sulfide + 3 NADP(+) + 3 H2O = sulfite + 3 NADPH + 4 H(+). The protein operates within sulfur metabolism; hydrogen sulfide biosynthesis; hydrogen sulfide from sulfite (NADPH route): step 1/1. Functionally, component of the sulfite reductase complex that catalyzes the 6-electron reduction of sulfite to sulfide. This is one of several activities required for the biosynthesis of L-cysteine from sulfate. The flavoprotein component catalyzes the electron flow from NADPH -&gt; FAD -&gt; FMN to the hemoprotein component. This Shewanella sp. (strain MR-7) protein is Sulfite reductase [NADPH] flavoprotein alpha-component.